The following is a 588-amino-acid chain: Aspartate--tRNA ligase (588 aa).

Glu172 provides a ligand contact to L-aspartate. The aspartate stretch occupies residues 196-199 (QLFK). Position 218 (Arg218) interacts with L-aspartate. Residues 218 to 220 (RDE) and Gln227 each bind ATP. An L-aspartate-binding site is contributed by His449. Residue Glu483 participates in ATP binding. Residue Arg490 coordinates L-aspartate. 535–538 (GLDR) is an ATP binding site.

Belongs to the class-II aminoacyl-tRNA synthetase family. Type 1 subfamily. Homodimer.

The protein resides in the cytoplasm. It catalyses the reaction tRNA(Asp) + L-aspartate + ATP = L-aspartyl-tRNA(Asp) + AMP + diphosphate. In terms of biological role, catalyzes the attachment of L-aspartate to tRNA(Asp) in a two-step reaction: L-aspartate is first activated by ATP to form Asp-AMP and then transferred to the acceptor end of tRNA(Asp). The sequence is that of Aspartate--tRNA ligase from Histophilus somni (strain 2336) (Haemophilus somnus).